A 323-amino-acid chain; its full sequence is Beta-ketoacyl-[acyl-carrier-protein] synthase III (323 aa).

Residues cysteine 113 and histidine 250 contribute to the active site. Residues 251 to 255 (QANKR) are ACP-binding. Residue asparagine 280 is part of the active site.

This sequence belongs to the thiolase-like superfamily. FabH family. As to quaternary structure, homodimer.

The protein localises to the cytoplasm. The catalysed reaction is malonyl-[ACP] + acetyl-CoA + H(+) = 3-oxobutanoyl-[ACP] + CO2 + CoA. It functions in the pathway lipid metabolism; fatty acid biosynthesis. Functionally, catalyzes the condensation reaction of fatty acid synthesis by the addition to an acyl acceptor of two carbons from malonyl-ACP. Catalyzes the first condensation reaction which initiates fatty acid synthesis and may therefore play a role in governing the total rate of fatty acid production. Possesses both acetoacetyl-ACP synthase and acetyl transacylase activities. Its substrate specificity determines the biosynthesis of branched-chain and/or straight-chain of fatty acids. This chain is Beta-ketoacyl-[acyl-carrier-protein] synthase III, found in Brucella suis (strain ATCC 23445 / NCTC 10510).